The chain runs to 407 residues: Argininosuccinate synthase (407 aa).

ATP contacts are provided by residues 16–24 and Ala-44; that span reads AYSGGLDTS. 2 residues coordinate L-citrulline: Tyr-96 and Ser-101. Gly-126 is an ATP binding site. Residues Thr-128, Asn-132, and Asp-133 each coordinate L-aspartate. Position 132 (Asn-132) interacts with L-citrulline. 5 residues coordinate L-citrulline: Arg-136, Ser-185, Ser-194, Glu-270, and Tyr-282.

The protein belongs to the argininosuccinate synthase family. Type 1 subfamily. In terms of assembly, homotetramer.

Its subcellular location is the cytoplasm. It catalyses the reaction L-citrulline + L-aspartate + ATP = 2-(N(omega)-L-arginino)succinate + AMP + diphosphate + H(+). The protein operates within amino-acid biosynthesis; L-arginine biosynthesis; L-arginine from L-ornithine and carbamoyl phosphate: step 2/3. This chain is Argininosuccinate synthase, found in Shewanella putrefaciens (strain CN-32 / ATCC BAA-453).